A 783-amino-acid chain; its full sequence is MSQTVTIQEPRPNDQRIPYQCREVRRAKGGFANRTYDYLYDPLFIVSSERDHAQANIQATLIRSRLKKVPNFRSMFSNLFHHPRYSMYWSKTDPVPLHVTREWRGQEAKHKEVLRLQAAMDTSFQMPKEKDEDPDVSGKNRYKFFDRPFLPFLQQMPLNVVLSPVKTQPLLLTPESSKYAIIPTKSTVATQTDYRDADVQTDPYSPEYVVCQDTIPELLTLANLTWGRGLPAGQAEVEIIERAREKRAWEATLPPLNDSVQAEKRRKMMNAMERKEWAFREGEIEKLQELRLEVLKQLLKRREEDQNELNMRHLNDQWYKLQEAKEAKVAQIRHKHVSDIRKLMGKGKNIEGKLQRRDIISDYSNFASQVYGPLSRLGRFPDNNSEDFVVRNHYLNTYEGLVELESSLPDFVTQPRIKPPKPQIITTKAGFLKRTARMDYELAEVHKALVDKKNKGLEGTKSLRFLQKNPISQARLPTPSLEMTSYEEGEIEMAVIYLQKLLRGRVVQNMMFEGKEKRLELILELRTSHALQEDDKLVKKAEKQVTLALQRQRNLHEDKLSVIENHLGDLEGRVLADMFDFLSKELVRLQEERRIHAFAMLAERQRRMREAEESGRRQVEQKRLQQEDMIFKEVIKVHQSTVTSYLEDIILNTEERTAEEQARKEIEKIAEEINNIAYEMENRRTYLQSEEIVAELVYSFLIPEVQKDFVKEKVRNAQRKHILAAHEIIHSNTETMLEEQVYKELQSEDFELEEEAESLDSEVPTVSVSKTSTIKPTQDEGEG.

Residues 748–760 (EDFELEEEAESLD) are compositionally biased toward acidic residues. The segment at 748-783 (EDFELEEEAESLDSEVPTVSVSKTSTIKPTQDEGEG) is disordered. Over residues 764–776 (PTVSVSKTSTIKP) the composition is skewed to polar residues.

This sequence belongs to the CFAP91 family. As to quaternary structure, part of a complex containing MYCBP, AKAP1 and PRKAR2B. Interacts with MYCBP and AKAP1. Interacts with CFAP61. Phosphorylated by PKA. As to expression, expressed in the testis, in cells involved in spermatogenesis.

The protein localises to the cytoplasm. Its subcellular location is the mitochondrion. It is found in the cytoskeleton. It localises to the cilium axoneme. Its function is as follows. Involved in sperm flagellum axonemal organization and function. May regulate cilium motility through its role in the assembly of the axonemal radial spokes. This Mus musculus (Mouse) protein is Cilia- and flagella-associated protein 91.